We begin with the raw amino-acid sequence, 80 residues long: Small ribosomal subunit protein bS18A (80 aa).

This sequence belongs to the bacterial ribosomal protein bS18 family. Part of the 30S ribosomal subunit. Forms a tight heterodimer with protein bS6.

In terms of biological role, binds as a heterodimer with protein bS6 to the central domain of the 16S rRNA, where it helps stabilize the platform of the 30S subunit. The protein is Small ribosomal subunit protein bS18A of Rhodococcus jostii (strain RHA1).